Here is a 247-residue protein sequence, read N- to C-terminus: LHFPL tetraspan subfamily member 4 protein (247 aa).

4 consecutive transmembrane segments (helical) span residues 22-42 (IGVLWAIFTICFAIINVVVFI), 97-117 (FFVLLSMVLILGCITCFSLFF), 127-147 (ICAWMQLLAALCLVLGCMIFP), and 178-198 (ILAIIGILNALILSFLAFVLG).

Belongs to the LHFP family. In terms of assembly, interacts with GABA(A) receptor subunits. Identified in a complex of 720 kDa composed of LHFPL4, NLGN2, GABRA1, GABRB2, GABRG2 and GABRB3. Interacts with GABRB3. Interacts with GABRA2. Interacts with GABRG2. Interacts with GABRA1. Interacts with NLGN2; leading to mutual regulation of protein level and synaptic clustering.

Its subcellular location is the cell projection. The protein localises to the dendrite. It is found in the postsynaptic cell membrane. Functionally, plays a role in the regulation of inhibitory synapse formation and function by being involved in maintening gamma-aminobutyric acid receptors (GABAARs) clustering and their associated scaffold proteins at inhibitory synaptic sites. Acts in concert with NLGN2 to recruit or stabilize GABAARs. In Homo sapiens (Human), this protein is LHFPL tetraspan subfamily member 4 protein.